The primary structure comprises 218 residues: Thiopurine S-methyltransferase (218 aa).

Residues W10, L45, E66, and R123 each contribute to the S-adenosyl-L-methionine site.

Belongs to the class I-like SAM-binding methyltransferase superfamily. TPMT family.

It localises to the cytoplasm. It carries out the reaction S-adenosyl-L-methionine + a thiopurine = S-adenosyl-L-homocysteine + a thiopurine S-methylether.. This chain is Thiopurine S-methyltransferase, found in Pseudomonas aeruginosa (strain ATCC 15692 / DSM 22644 / CIP 104116 / JCM 14847 / LMG 12228 / 1C / PRS 101 / PAO1).